The sequence spans 160 residues: Transmembrane protein 220 (160 aa).

5 helical membrane passes run 3–23 (PALW…AALV), 30–50 (AEVW…VGLN), 62–82 (ISAI…SYLL), 100–120 (GLVI…NPVG), and 125–145 (LAIA…IYIN).

Its subcellular location is the membrane. This chain is Transmembrane protein 220 (TMEM220), found in Homo sapiens (Human).